Reading from the N-terminus, the 167-residue chain is Lipoprotein signal peptidase (167 aa).

4 helical membrane-spanning segments follow: residues 8–28, 46–66, 68–88, and 101–121; these read TFLTLLLLASIDWVSKLVVLL, WGHFSFLIIPSFNEGAAFGLF, QYKIPLLIFRVCVILGLALFL, and IALTLILAGALGNVGDILLHG. Residues Asp125 and Asp143 contribute to the active site. A helical membrane pass occupies residues 139 to 159; sequence FNLADAFISIGTLLLIGHLYF.

It belongs to the peptidase A8 family.

The protein localises to the cell inner membrane. The catalysed reaction is Release of signal peptides from bacterial membrane prolipoproteins. Hydrolyzes -Xaa-Yaa-Zaa-|-(S,diacylglyceryl)Cys-, in which Xaa is hydrophobic (preferably Leu), and Yaa (Ala or Ser) and Zaa (Gly or Ala) have small, neutral side chains.. It functions in the pathway protein modification; lipoprotein biosynthesis (signal peptide cleavage). In terms of biological role, this protein specifically catalyzes the removal of signal peptides from prolipoproteins. In Chlamydia trachomatis serovar L2b (strain UCH-1/proctitis), this protein is Lipoprotein signal peptidase.